Consider the following 500-residue polypeptide: Intermediate filament protein ifc-1 (500 aa).

The tract at residues 1 to 36 is head; the sequence is MSLYGGIPTNLVSGMSSAGAICTTQIRDAREREKRE. The region spanning 33–383 is the IF rod domain; that stretch reads EKREIGLLND…VLLNGANVTT (351 aa). The tract at residues 37–68 is coil 1A; that stretch reads IGLLNDRLADYIEKVRFLKAQNHVLSHDIEIL. Positions 69–81 are linker 1; sequence RRGFSGGGHISSF. The tract at residues 82-219 is coil 1B; sequence FESEISNCTV…TENSSRIEQE (138 aa). Positions 220 to 237 are linker 12; the sequence is LIYIHRDTTLENRDYFRQ. Residues 238-383 form a coil 2 region; sequence ELQAAMRDIR…VLLNGANVTT (146 aa). Residues 384-496 form a tail region; the sequence is YVSNSTGAAG…RHHESSYSYS (113 aa).

The protein belongs to the intermediate filament family.

The protein localises to the cytoplasm. In terms of biological role, cytoplasmic intermediate filaments provide mechanical strength to cells. Not essential protein. This Caenorhabditis elegans protein is Intermediate filament protein ifc-1 (ifc-1).